Here is a 499-residue protein sequence, read N- to C-terminus: Ribulose bisphosphate carboxylase large chain (499 aa).

Substrate contacts are provided by asparagine 139 and threonine 189. Lysine 191 acts as the Proton acceptor in catalysis. Lysine 193 is a substrate binding site. 3 residues coordinate Mg(2+): lysine 217, aspartate 219, and glutamate 220. Lysine 217 carries the N6-carboxylysine modification. Histidine 309 (proton acceptor) is an active-site residue. Residues arginine 310, histidine 342, and serine 394 each coordinate substrate.

This sequence belongs to the RuBisCO large chain family. Type I subfamily. In terms of assembly, heterohexadecamer of 8 large chains and 8 small chains. Mg(2+) serves as cofactor.

It carries out the reaction 2 (2R)-3-phosphoglycerate + 2 H(+) = D-ribulose 1,5-bisphosphate + CO2 + H2O. The catalysed reaction is D-ribulose 1,5-bisphosphate + O2 = 2-phosphoglycolate + (2R)-3-phosphoglycerate + 2 H(+). Functionally, ruBisCO catalyzes two reactions: the carboxylation of D-ribulose 1,5-bisphosphate, the primary event in carbon dioxide fixation, as well as the oxidative fragmentation of the pentose substrate. Both reactions occur simultaneously and in competition at the same active site. The protein is Ribulose bisphosphate carboxylase large chain of Paraburkholderia xenovorans (strain LB400).